Here is a 396-residue protein sequence, read N- to C-terminus: Purple acid phosphatase 5 (396 aa).

The first 13 residues, 1–13, serve as a signal peptide directing secretion; it reads MSLETFPPPAGYN. N-linked (GlcNAc...) asparagine glycosylation is present at asparagine 58. A Fe cation-binding site is contributed by aspartate 125. N-linked (GlcNAc...) asparagine glycosylation occurs at asparagine 133. The Fe cation site is built by aspartate 153 and tyrosine 156. Position 153 (aspartate 153) interacts with Zn(2+). Position 190 (asparagine 190) interacts with Zn(2+). Asparagine 190 serves as a coordination point for substrate. N-linked (GlcNAc...) asparagine glycosylation is present at asparagine 238. Histidine 250 lines the Zn(2+) pocket. Residue histidine 260 is the Proton donor of the active site. Histidine 287 is a binding site for Zn(2+). 287–289 lines the substrate pocket; that stretch reads HVH. Histidine 289 contacts Fe cation. Asparagine 303 and asparagine 360 each carry an N-linked (GlcNAc...) asparagine glycan.

The protein belongs to the metallophosphoesterase superfamily. Purple acid phosphatase family. As to quaternary structure, homodimer. Fe cation serves as cofactor. Requires Zn(2+) as cofactor.

The protein localises to the secreted. The enzyme catalyses a phosphate monoester + H2O = an alcohol + phosphate. The protein is Purple acid phosphatase 5 (PAP5) of Arabidopsis thaliana (Mouse-ear cress).